We begin with the raw amino-acid sequence, 335 residues long: Histidinol-phosphatase (335 aa).

The protein belongs to the PHP hydrolase family. HisK subfamily.

The catalysed reaction is L-histidinol phosphate + H2O = L-histidinol + phosphate. It functions in the pathway amino-acid biosynthesis; L-histidine biosynthesis; L-histidine from 5-phospho-alpha-D-ribose 1-diphosphate: step 8/9. The chain is Histidinol-phosphatase (HIS2) from Saccharomyces cerevisiae (strain ATCC 204508 / S288c) (Baker's yeast).